Reading from the N-terminus, the 155-residue chain is Arginine repressor (155 aa).

This sequence belongs to the ArgR family.

It is found in the cytoplasm. The protein operates within amino-acid biosynthesis; L-arginine biosynthesis [regulation]. Functionally, regulates arginine biosynthesis genes. In Mannheimia succiniciproducens (strain KCTC 0769BP / MBEL55E), this protein is Arginine repressor.